A 397-amino-acid polypeptide reads, in one-letter code: Glutamyl-tRNA reductase (397 aa).

Substrate is bound by residues 47–50 (TCGR), S98, 103–105 (ETD), and Q109. C48 serves as the catalytic Nucleophile. 177–182 (GAGAVG) provides a ligand contact to NADP(+).

Belongs to the glutamyl-tRNA reductase family. In terms of assembly, homodimer.

It carries out the reaction (S)-4-amino-5-oxopentanoate + tRNA(Glu) + NADP(+) = L-glutamyl-tRNA(Glu) + NADPH + H(+). Its pathway is porphyrin-containing compound metabolism; protoporphyrin-IX biosynthesis; 5-aminolevulinate from L-glutamyl-tRNA(Glu): step 1/2. Its function is as follows. Catalyzes the NADPH-dependent reduction of glutamyl-tRNA(Glu) to glutamate 1-semialdehyde (GSA). The sequence is that of Glutamyl-tRNA reductase from Pyrobaculum aerophilum (strain ATCC 51768 / DSM 7523 / JCM 9630 / CIP 104966 / NBRC 100827 / IM2).